The following is a 159-amino-acid chain: Putative pre-16S rRNA nuclease (159 aa).

This sequence belongs to the YqgF nuclease family.

The protein localises to the cytoplasm. Functionally, could be a nuclease involved in processing of the 5'-end of pre-16S rRNA. This chain is Putative pre-16S rRNA nuclease, found in Bartonella henselae (strain ATCC 49882 / DSM 28221 / CCUG 30454 / Houston 1) (Rochalimaea henselae).